A 352-amino-acid polypeptide reads, in one-letter code: Ribosome biogenesis protein BRX1 homolog (352 aa).

The disordered stretch occupies residues 1-47 (MAATKRKRRGDLEVQAKKPKKNRKDAGQPAKQADVAKEAEEEKDRIP). Positions 34–46 (DVAKEAEEEKDRI) are enriched in basic and acidic residues. One can recognise a Brix domain in the interval 59 to 248 (ERILIFSSRG…LIKIFQGSFG (190 aa)). A Glycyl lysine isopeptide (Lys-Gly) (interchain with G-Cter in SUMO2) cross-link involves residue K159. S260 is subject to Phosphoserine. K275 bears the N6-acetyllysine mark. A disordered region spans residues 281 to 301 (QVKDVQKSRKKEPKTILPHDP). Glycyl lysine isopeptide (Lys-Gly) (interchain with G-Cter in SUMO2) cross-links involve residues K313 and K321.

The protein belongs to the BRX1 family.

It localises to the nucleus. It is found in the nucleolus. Its function is as follows. Required for biogenesis of the 60S ribosomal subunit. The polypeptide is Ribosome biogenesis protein BRX1 homolog (Brix1) (Rattus norvegicus (Rat)).